Consider the following 129-residue polypeptide: Small ribosomal subunit protein uS11 (129 aa).

Belongs to the universal ribosomal protein uS11 family. As to quaternary structure, part of the 30S ribosomal subunit. Interacts with proteins S7 and S18. Binds to IF-3.

Its function is as follows. Located on the platform of the 30S subunit, it bridges several disparate RNA helices of the 16S rRNA. Forms part of the Shine-Dalgarno cleft in the 70S ribosome. This chain is Small ribosomal subunit protein uS11, found in Pasteurella multocida (strain Pm70).